Reading from the N-terminus, the 231-residue chain is 5'-methylthioadenosine/S-adenosylhomocysteine nucleosidase (231 aa).

The Proton acceptor role is filled by E12. Residues G78, M153, and 174 to 175 (ME) contribute to the substrate site. Residue D198 is the Proton donor of the active site.

It belongs to the PNP/UDP phosphorylase family. MtnN subfamily.

It catalyses the reaction S-adenosyl-L-homocysteine + H2O = S-(5-deoxy-D-ribos-5-yl)-L-homocysteine + adenine. The catalysed reaction is S-methyl-5'-thioadenosine + H2O = 5-(methylsulfanyl)-D-ribose + adenine. It carries out the reaction 5'-deoxyadenosine + H2O = 5-deoxy-D-ribose + adenine. Its pathway is amino-acid biosynthesis; L-methionine biosynthesis via salvage pathway; S-methyl-5-thio-alpha-D-ribose 1-phosphate from S-methyl-5'-thioadenosine (hydrolase route): step 1/2. In terms of biological role, catalyzes the irreversible cleavage of the glycosidic bond in both 5'-methylthioadenosine (MTA) and S-adenosylhomocysteine (SAH/AdoHcy) to adenine and the corresponding thioribose, 5'-methylthioribose and S-ribosylhomocysteine, respectively. Also cleaves 5'-deoxyadenosine, a toxic by-product of radical S-adenosylmethionine (SAM) enzymes, into 5-deoxyribose and adenine. The protein is 5'-methylthioadenosine/S-adenosylhomocysteine nucleosidase of Bacillus cereus (strain G9842).